The sequence spans 457 residues: Cyclic dof factor 2 (457 aa).

The interval 1-130 (MADPAIKLFG…GGTACSQEGK (130 aa)) is disordered. Positions 22–35 (DSSSSYTGFLTETQ) are enriched in polar residues. Acidic residues-rich tracts occupy residues 45–54 (TGDDDDEEMG) and 62–73 (EGDDVGDGGGES). Composition is skewed to basic and acidic residues over residues 74-94 (ETDK…RNES) and 106-118 (EKTE…KTNE). A Dof-type zinc finger spans residues 138–192 (LPCPRCNSMETKFCYYNNYNVNQPRHFCKKCQRYWTAGGTMRNVPVGAGRRKNKS). The Zn(2+) site is built by cysteine 140, cysteine 143, cysteine 165, and cysteine 168. 2 disordered regions span residues 334–377 (QPNS…KSKP) and 417–457 (AFRS…HESS). The span at 337–346 (SPSGSNPNSP) shows a compositional bias: low complexity.

In terms of assembly, interacts with ADO2 (via kelch repeats) and ADO3 (via kelch repeats). Expressed in the vasculature of cotyledons and hypocotyls, leaves and roots.

It is found in the nucleus. Functionally, transcription factor that binds specifically to a 5'-AA[AG]G-3' consensus core sequence. Regulates a photoperiodic flowering response. Transcriptional repressor of 'CONSTANS' expression. The stability of CDF2 is controlled by 'GIGANTEA' and redundantly by ADO3, ADO2 and/or ADO1. The protein is Cyclic dof factor 2 (CDF2) of Arabidopsis thaliana (Mouse-ear cress).